A 402-amino-acid polypeptide reads, in one-letter code: MIAYFLLLLTCLPVLQARVEVHQEFISSKRVSVRFEIVTESHSPNRPVTFDLFPRGPKTNIILLDTFNPVFNFSIQLVQPFTGQPLGDRIYRKVQFSGTNQPWINDTFTTTSGISLSVATEVTCARNYFGNRCENFCDAHLAKAARKRCDAMGRLRCDIGWMGPHCGQAVDPRKCSCENDGICVSSMIHPSQPNQTSSNEQLICECTNGFTGTRCEIFGFNQFQLTAPRPDACSVKDACLNGAKCFPNGPKVFCSCAVGFIGEFCEISLTTTTPTTVEITVSTSGYSSAVYITVALFVIFSIIIGCFKYKFKPMRQQALARGQVPEPYKMPETKSMLIDPEASEAQKKVFTIEGSVQKIDEEVRYTSAPRKYESNNEYAVIQKSTPPPPSLSPPSIPACHYV.

The signal sequence occupies residues 1 to 15 (MIAYFLLLLTCLPVL). Topologically, residues 16-279 (QARVEVHQEF…TTTTPTTVEI (264 aa)) are extracellular. N-linked (GlcNAc...) asparagine glycans are attached at residues Asn-72 and Asn-105. Residues 122–166 (VTCARNYFGNRCENFCDAHLAKAARKRCDAMGRLRCDIGWMGPHC) form the DSL domain. Cystine bridges form between Cys-124/Cys-133, Cys-137/Cys-149, Cys-157/Cys-166, Cys-175/Cys-183, Cys-177/Cys-204, Cys-206/Cys-215, Cys-233/Cys-245, Cys-239/Cys-254, and Cys-256/Cys-265. 2 consecutive EGF-like domains span residues 171–216 (DPRK…TRCE) and 229–266 (RPDACSVKDACLNGAKCFPNGPKVFCSCAVGFIGEFCE). N-linked (GlcNAc...) asparagine glycosylation occurs at Asn-194. The chain crosses the membrane as a helical span at residues 280–306 (TVSTSGYSSAVYITVALFVIFSIIIGC). Over 307–402 (FKYKFKPMRQ…PPSIPACHYV (96 aa)) the chain is Cytoplasmic.

As to quaternary structure, may interact with lin-12 / Notch receptor. In terms of tissue distribution, expressed in the gonad distal tip cell (DTC) of hermaphrodites.

It localises to the cell membrane. Its function is as follows. Probable ligand for lin-12/Notch and glp-1/Notch receptors and involved in the mediation of Notch signaling. Involved in the lin-12/Notch pathway signaling of cell fate in vulval precursor cells (VPCs) and in the postembryonic mesodermal lineage (M lineage), acting redundantly with dsl-1 and apx-1. Functions in uterine cells to promote basement membrane mobility during tissue remodeling. Required for oocyte growth control, acting redundantly with apx-1, perhaps signaling via the glp-1/Notch pathway. Plays a role in Notch-dependent induction of left-right asymmetry in interneurons and motoneurons. Involved in maintaining the developmentally arrested larval state known as dauer, probably signaling in the glp-1/Notch pathway. Required for normal sleep bout quantity and arousal thresholds during the transition from the last larval stage to adulthood in well-fed animals. This chain is Protein lag-2, found in Caenorhabditis elegans.